Consider the following 140-residue polypeptide: Endoribonuclease YbeY (140 aa).

Positions 100, 104, and 110 each coordinate Zn(2+).

This sequence belongs to the endoribonuclease YbeY family. Requires Zn(2+) as cofactor.

It is found in the cytoplasm. Its function is as follows. Single strand-specific metallo-endoribonuclease involved in late-stage 70S ribosome quality control and in maturation of the 3' terminus of the 16S rRNA. The polypeptide is Endoribonuclease YbeY (Helicobacter pylori (strain Shi470)).